A 563-amino-acid polypeptide reads, in one-letter code: DNA repair protein rhp7 (563 aa).

Residues 1–101 (MSSGSRVRGP…TDEEAEDNED (101 aa)) form a disordered region. Over residues 39–59 (ESAGQSTGTESEVIQTPTSVE) the composition is skewed to polar residues. Positions 78–90 (VKRRNLRNQKKKK) are enriched in basic residues.

This sequence belongs to the RAD7 family.

It localises to the nucleus. Involved in global genome repair (GGR) via nucleotide excision repair (NER), in conjunction with rhp16, after UV irradiation. The sequence is that of DNA repair protein rhp7 (rhp7) from Schizosaccharomyces pombe (strain 972 / ATCC 24843) (Fission yeast).